A 239-amino-acid polypeptide reads, in one-letter code: Ubiquinone biosynthesis O-methyltransferase (239 aa).

Positions 44, 63, 84, and 128 each coordinate S-adenosyl-L-methionine.

The protein belongs to the methyltransferase superfamily. UbiG/COQ3 family.

The catalysed reaction is a 3-demethylubiquinol + S-adenosyl-L-methionine = a ubiquinol + S-adenosyl-L-homocysteine + H(+). The enzyme catalyses a 3-(all-trans-polyprenyl)benzene-1,2-diol + S-adenosyl-L-methionine = a 2-methoxy-6-(all-trans-polyprenyl)phenol + S-adenosyl-L-homocysteine + H(+). Its pathway is cofactor biosynthesis; ubiquinone biosynthesis. Functionally, O-methyltransferase that catalyzes the 2 O-methylation steps in the ubiquinone biosynthetic pathway. The chain is Ubiquinone biosynthesis O-methyltransferase from Xanthomonas axonopodis pv. citri (strain 306).